The sequence spans 151 residues: Sperm surface protein Sp17 (151 aa).

The span at 68-98 (FYNNHAFEEQEPPEKSDPKQEESQIPGKEEE) shows a compositional bias: basic and acidic residues. 2 disordered regions span residues 68–115 (FYNN…EKEE) and 130–151 (AREEVKKMKTDSLQNEEKEENK). One can recognise an IQ domain in the interval 114-143 (EEVAAVKIQAAFRGHVAREEVKKMKTDSLQ).

As to quaternary structure, homodimer. May interact with ROPN1. In terms of tissue distribution, testis- and sperm-specific.

It localises to the membrane. In terms of biological role, sperm surface zona pellucida binding protein. Helps to bind spermatozoa to the zona pellucida with high affinity. Might function in binding zona pellucida and carbohydrates. The protein is Sperm surface protein Sp17 (SPA17) of Macaca fascicularis (Crab-eating macaque).